We begin with the raw amino-acid sequence, 119 residues long: Large ribosomal subunit protein bL17 (119 aa).

Belongs to the bacterial ribosomal protein bL17 family. In terms of assembly, part of the 50S ribosomal subunit. Contacts protein L32.

The protein is Large ribosomal subunit protein bL17 of Mycoplasma mycoides subsp. mycoides SC (strain CCUG 32753 / NCTC 10114 / PG1).